The primary structure comprises 102 residues: Small ribosomal subunit protein uS10 (102 aa).

This sequence belongs to the universal ribosomal protein uS10 family. In terms of assembly, part of the 30S ribosomal subunit.

Functionally, involved in the binding of tRNA to the ribosomes. In Pyrococcus horikoshii (strain ATCC 700860 / DSM 12428 / JCM 9974 / NBRC 100139 / OT-3), this protein is Small ribosomal subunit protein uS10.